Reading from the N-terminus, the 154-residue chain is Large ribosomal subunit protein uL13 (154 aa).

The protein belongs to the universal ribosomal protein uL13 family. As to quaternary structure, part of the 50S ribosomal subunit.

Functionally, this protein is one of the early assembly proteins of the 50S ribosomal subunit, although it is not seen to bind rRNA by itself. It is important during the early stages of 50S assembly. The protein is Large ribosomal subunit protein uL13 of Rhizobium meliloti (strain 1021) (Ensifer meliloti).